Reading from the N-terminus, the 256-residue chain is Enolase-phosphatase E1 (256 aa).

Aspartate 13 and glutamate 15 together coordinate Mg(2+). Substrate-binding positions include 127-128 and lysine 175; that span reads SS. Aspartate 202 is a Mg(2+) binding site.

It belongs to the HAD-like hydrolase superfamily. MasA/MtnC family. In terms of assembly, monomer. Mg(2+) serves as cofactor.

It localises to the cytoplasm. The protein localises to the nucleus. The enzyme catalyses 5-methylsulfanyl-2,3-dioxopentyl phosphate + H2O = 1,2-dihydroxy-5-(methylsulfanyl)pent-1-en-3-one + phosphate. The protein operates within amino-acid biosynthesis; L-methionine biosynthesis via salvage pathway; L-methionine from S-methyl-5-thio-alpha-D-ribose 1-phosphate: step 3/6. Its pathway is amino-acid biosynthesis; L-methionine biosynthesis via salvage pathway; L-methionine from S-methyl-5-thio-alpha-D-ribose 1-phosphate: step 4/6. In terms of biological role, bifunctional enzyme that catalyzes the enolization of 2,3-diketo-5-methylthiopentyl-1-phosphate (DK-MTP-1-P) into the intermediate 2-hydroxy-3-keto-5-methylthiopentenyl-1-phosphate (HK-MTPenyl-1-P), which is then dephosphorylated to form the acireductone 1,2-dihydroxy-3-keto-5-methylthiopentene (DHK-MTPene). The chain is Enolase-phosphatase E1 (utr4) from Botryotinia fuckeliana (strain B05.10) (Noble rot fungus).